A 505-amino-acid chain; its full sequence is ATP synthase subunit alpha (505 aa).

An ATP-binding site is contributed by 171–178; that stretch reads GDRQTGKT.

The protein belongs to the ATPase alpha/beta chains family. As to quaternary structure, F-type ATPases have 2 components, CF(1) - the catalytic core - and CF(0) - the membrane proton channel. CF(1) has five subunits: alpha(3), beta(3), gamma(1), delta(1), epsilon(1). CF(0) has three main subunits: a(1), b(2) and c(9-12). The alpha and beta chains form an alternating ring which encloses part of the gamma chain. CF(1) is attached to CF(0) by a central stalk formed by the gamma and epsilon chains, while a peripheral stalk is formed by the delta and b chains.

It is found in the cell inner membrane. The enzyme catalyses ATP + H2O + 4 H(+)(in) = ADP + phosphate + 5 H(+)(out). Produces ATP from ADP in the presence of a proton gradient across the membrane. The alpha chain is a regulatory subunit. The chain is ATP synthase subunit alpha from Nitratiruptor sp. (strain SB155-2).